We begin with the raw amino-acid sequence, 237 residues long: MTINALLLSSSRVGDTPYLAHAIPFIKPLTTNAQKWIFIPYAGVSMSYDNYLASVVTGLSELELDISGIHQHPDPQQAIKDADGILIGGGNTFHLLHQLYRYDLVTLIGEQVALGKPYIGWSAGSNVSGQSIRTTNDMPIIEPPSFKALNLLPFQLNPHYSNYQAPGHNGETRAQRLLEFTKVDPLTPVVGIVEGSALWRQGDKLSLLGDQPAYLFCGEQQEIPIPVGSDLSHLLKA.

Active-site charge relay system residues include serine 122, aspartate 137, and histidine 159.

It belongs to the peptidase S51 family.

Its subcellular location is the cytoplasm. It catalyses the reaction Dipeptidase E catalyzes the hydrolysis of dipeptides Asp-|-Xaa. It does not act on peptides with N-terminal Glu, Asn or Gln, nor does it cleave isoaspartyl peptides.. Hydrolyzes dipeptides containing N-terminal aspartate residues. May play a role in allowing the cell to use peptide aspartate to spare carbon otherwise required for the synthesis of the aspartate family of amino acids. The protein is Peptidase E of Shewanella baltica (strain OS185).